An 88-amino-acid polypeptide reads, in one-letter code: Putative membrane protein insertion efficiency factor (88 aa).

Belongs to the UPF0161 family.

It is found in the cell membrane. Its function is as follows. Could be involved in insertion of integral membrane proteins into the membrane. This Lactococcus lactis subsp. lactis (strain IL1403) (Streptococcus lactis) protein is Putative membrane protein insertion efficiency factor (yrcB).